The sequence spans 414 residues: Argininosuccinate synthase (414 aa).

ATP contacts are provided by residues 9 to 17 (AYSGGLDTS) and alanine 35. L-citrulline-binding residues include tyrosine 86 and serine 91. 114 to 122 (SHGATGKGN) provides a ligand contact to ATP. L-aspartate contacts are provided by threonine 118, asparagine 122, and aspartate 123. L-citrulline is bound at residue asparagine 122. L-citrulline-binding residues include arginine 126, serine 179, serine 188, glutamate 269, and tyrosine 281.

The protein belongs to the argininosuccinate synthase family. As to quaternary structure, homotetramer.

Its subcellular location is the cytoplasm. The protein resides in the cytosol. It catalyses the reaction L-citrulline + L-aspartate + ATP = 2-(N(omega)-L-arginino)succinate + AMP + diphosphate + H(+). It functions in the pathway amino-acid biosynthesis; L-arginine biosynthesis; L-arginine from L-ornithine and carbamoyl phosphate: step 2/3. Its pathway is nitrogen metabolism; urea cycle; (N(omega)-L-arginino)succinate from L-aspartate and L-citrulline: step 1/1. Its function is as follows. One of the enzymes of the urea cycle, the metabolic pathway transforming neurotoxic amonia produced by protein catabolism into inocuous urea in the liver of ureotelic animals. Catalyzes the formation of arginosuccinate from aspartate, citrulline and ATP and together with ASL it is responsible for the biosynthesis of arginine in most body tissues. In Danio rerio (Zebrafish), this protein is Argininosuccinate synthase.